We begin with the raw amino-acid sequence, 193 residues long: Flagellar transcriptional regulator FlhC (193 aa).

Residues Cys138, Cys141, Cys158, and Cys161 each coordinate Zn(2+).

This sequence belongs to the FlhC family. Heterohexamer composed of two FlhC and four FlhD subunits. Each FlhC binds a FlhD dimer, forming a heterotrimer, and a hexamer assembles by dimerization of two heterotrimers. Zn(2+) is required as a cofactor.

The protein resides in the cytoplasm. Its function is as follows. Functions in complex with FlhD as a master transcriptional regulator that regulates transcription of several flagellar and non-flagellar operons by binding to their promoter region. Activates expression of class 2 flagellar genes, including fliA, which is a flagellum-specific sigma factor that turns on the class 3 genes. Also regulates genes whose products function in a variety of physiological pathways. The protein is Flagellar transcriptional regulator FlhC of Proteus mirabilis.